A 235-amino-acid chain; its full sequence is Putative N-acetylmannosamine-6-phosphate 2-epimerase (235 aa).

The protein belongs to the NanE family.

The catalysed reaction is an N-acyl-D-glucosamine 6-phosphate = an N-acyl-D-mannosamine 6-phosphate. It participates in amino-sugar metabolism; N-acetylneuraminate degradation; D-fructose 6-phosphate from N-acetylneuraminate: step 3/5. Functionally, converts N-acetylmannosamine-6-phosphate (ManNAc-6-P) to N-acetylglucosamine-6-phosphate (GlcNAc-6-P). This is Putative N-acetylmannosamine-6-phosphate 2-epimerase from Aliivibrio fischeri (strain ATCC 700601 / ES114) (Vibrio fischeri).